The primary structure comprises 37 residues: Large ribosomal subunit protein bL36c (37 aa).

It belongs to the bacterial ribosomal protein bL36 family.

It is found in the plastid. The protein localises to the chloroplast. This Nicotiana tomentosiformis (Tobacco) protein is Large ribosomal subunit protein bL36c.